The primary structure comprises 212 residues: Small ribosomal subunit protein uS2 (212 aa).

Positions L190–V212 are disordered.

This sequence belongs to the universal ribosomal protein uS2 family.

The polypeptide is Small ribosomal subunit protein uS2 (Ignicoccus hospitalis (strain KIN4/I / DSM 18386 / JCM 14125)).